The following is a 138-amino-acid chain: uncharacterized protein (138 aa).

Residues 19 to 40 (ECKVSVISFFLLAFLLMAHIWL) traverse the membrane as a helical segment. A run of 3 repeats spans residues 94 to 106 (KGEIEGKEEKKEG), 107 to 119 (KGEIEGKEEKKEG), and 120 to 132 (KGEIEGKEEKKEV). The tract at residues 94 to 132 (KGEIEGKEEKKEGKGEIEGKEEKKEGKGEIEGKEEKKEV) is 3 X 13 AA tandem repeats of K-G-E-I-E-G-K-E-E-K-K-E-[GV]. The disordered stretch occupies residues 98-138 (EGKEEKKEGKGEIEGKEEKKEGKGEIEGKEEKKEVENGPRK).

In terms of tissue distribution, expressed in roots, leaves and flowers.

The protein resides in the mitochondrion membrane. Functionally, involved in cytoplasmic male sterility (CMS) by leading to pollen abortion. Not expressed in fertile (normal) plants. This is an uncharacterized protein from Raphanus sativus (Radish).